The following is a 275-amino-acid chain: Fructose-2,6-bisphosphatase TIGAR (275 aa).

The Tele-phosphohistidine intermediate role is filled by His11. The active-site Proton donor/acceptor is Glu89.

Belongs to the phosphoglycerate mutase family.

The protein localises to the cytoplasm. The protein resides in the nucleus. It is found in the mitochondrion. It catalyses the reaction beta-D-fructose 2,6-bisphosphate + H2O = beta-D-fructose 6-phosphate + phosphate. Fructose-bisphosphatase hydrolyzing fructose-2,6-bisphosphate as well as fructose-1,6-bisphosphate. Acts as a negative regulator of glycolysis by lowering intracellular levels of fructose-2,6-bisphosphate in a p53/TP53-dependent manner, resulting in the pentose phosphate pathway (PPP) activation and NADPH production. Contributes to the generation of reduced glutathione to cause a decrease in intracellular reactive oxygen species (ROS) content, correlating with its ability to protect cells from oxidative or metabolic stress-induced cell death. May play a role in mitophagy inhibition. This is Fructose-2,6-bisphosphatase TIGAR from Xenopus tropicalis (Western clawed frog).